A 152-amino-acid polypeptide reads, in one-letter code: Proteolipid protein 2 (152 aa).

The region spanning phenylalanine 19 to glutamine 137 is the MARVEL domain. 3 consecutive transmembrane segments (helical) span residues glycine 25 to serine 45, glycine 48 to methionine 68, and phenylalanine 85 to glutamate 105. A glycan (N-linked (GlcNAc...) asparagine) is linked at asparagine 108. A helical transmembrane segment spans residues isoleucine 112–threonine 132.

It localises to the membrane. Its function is as follows. May play a role in cell differentiation in the intestinal epithelium. The chain is Proteolipid protein 2 (PLP2) from Bos taurus (Bovine).